A 94-amino-acid polypeptide reads, in one-letter code: Co-chaperonin GroES (94 aa).

Belongs to the GroES chaperonin family. Heptamer of 7 subunits arranged in a ring. Interacts with the chaperonin GroEL.

Its subcellular location is the cytoplasm. In terms of biological role, together with the chaperonin GroEL, plays an essential role in assisting protein folding. The GroEL-GroES system forms a nano-cage that allows encapsulation of the non-native substrate proteins and provides a physical environment optimized to promote and accelerate protein folding. GroES binds to the apical surface of the GroEL ring, thereby capping the opening of the GroEL channel. This is Co-chaperonin GroES from Latilactobacillus sakei subsp. sakei (strain 23K) (Lactobacillus sakei subsp. sakei).